The sequence spans 222 residues: PKHD-type hydroxylase PCC8801_2196 (222 aa).

Residues arginine 78–serine 175 form the Fe2OG dioxygenase domain. 3 residues coordinate Fe cation: histidine 96, aspartate 98, and histidine 156. Arginine 166 is a binding site for 2-oxoglutarate.

Fe(2+) serves as cofactor. L-ascorbate is required as a cofactor.

This Rippkaea orientalis (strain PCC 8801 / RF-1) (Cyanothece sp. (strain PCC 8801)) protein is PKHD-type hydroxylase PCC8801_2196.